We begin with the raw amino-acid sequence, 446 residues long: Histidine--tRNA ligase (446 aa).

The protein belongs to the class-II aminoacyl-tRNA synthetase family. In terms of assembly, homodimer.

It is found in the cytoplasm. It catalyses the reaction tRNA(His) + L-histidine + ATP = L-histidyl-tRNA(His) + AMP + diphosphate + H(+). This is Histidine--tRNA ligase from Paraburkholderia phymatum (strain DSM 17167 / CIP 108236 / LMG 21445 / STM815) (Burkholderia phymatum).